The primary structure comprises 520 residues: Laccase (520 aa).

The first 21 residues, 1–21 (MHTFLRSTALVVAGLSARALA), serve as a signal peptide directing secretion. 2 consecutive Plastocyanin-like domains span residues 22–148 (SIGP…FVVY) and 160–304 (VDDD…ILRY). Residue Asn75 is glycosylated (N-linked (GlcNAc...) asparagine). Cu cation contacts are provided by His85, His87, His130, and His132. 2 cysteine pairs are disulfide-bonded: Cys106/Cys509 and Cys138/Cys227. Asn352 and Asn402 each carry an N-linked (GlcNAc...) asparagine glycan. In terms of domain architecture, Plastocyanin-like 3 spans 373-496 (TVPVLLQILS…VFAEDIPDVA (124 aa)). 7 residues coordinate Cu cation: His418, His421, His423, His473, Cys474, His475, and His479.

Belongs to the multicopper oxidase family. The cofactor is Cu cation.

Its subcellular location is the secreted. The catalysed reaction is 4 hydroquinone + O2 = 4 benzosemiquinone + 2 H2O. In terms of biological role, lignin degradation and detoxification of lignin-derived products. This chain is Laccase (LAC), found in Phlebia radiata (White-rot fungus).